The primary structure comprises 544 residues: Exodeoxyribonuclease 7 large subunit (544 aa).

The disordered stretch occupies residues 522 to 544 (PETPPKSRKADNPPEPPEQTSFL).

This sequence belongs to the XseA family. Heterooligomer composed of large and small subunits.

The protein localises to the cytoplasm. It carries out the reaction Exonucleolytic cleavage in either 5'- to 3'- or 3'- to 5'-direction to yield nucleoside 5'-phosphates.. Its function is as follows. Bidirectionally degrades single-stranded DNA into large acid-insoluble oligonucleotides, which are then degraded further into small acid-soluble oligonucleotides. This is Exodeoxyribonuclease 7 large subunit from Zymomonas mobilis subsp. mobilis (strain ATCC 31821 / ZM4 / CP4).